Here is a 401-residue protein sequence, read N- to C-terminus: Steroid C26-monooxygenase (401 aa).

Cysteine 343 contributes to the heme binding site.

This sequence belongs to the cytochrome P450 family. Heme is required as a cofactor.

The catalysed reaction is cholest-4-en-3-one + 6 reduced [2Fe-2S]-[ferredoxin] + 3 O2 + 5 H(+) = (25R)-3-oxocholest-4-en-26-oate + 6 oxidized [2Fe-2S]-[ferredoxin] + 4 H2O. It functions in the pathway steroid metabolism; cholesterol degradation. Functionally, involved in the utilization of cholesterol as the sole carbon and energy source by degrading the side chain. Primarily catalyzes the sequential oxidation of the terminal methyl of cholest-4-en-3-one into (25R)-26-hydroxycholest-4-en-3-one (alcohol), (25R)-26-oxocholest-4-en-3-one (aldehyde), to finally yield the carboxylic acid (25R)-3-oxocholest-4-en-26-oate. Also able to sequentially oxidize cholesterol itself, not only cholest-4-en-3-one. This Mycolicibacterium smegmatis (strain ATCC 700084 / mc(2)155) (Mycobacterium smegmatis) protein is Steroid C26-monooxygenase.